The primary structure comprises 196 residues: Adenylate kinase (196 aa).

9–17 (GIPGVGKST) is a binding site for ATP.

Belongs to the archaeal adenylate kinase family.

The protein resides in the cytoplasm. The catalysed reaction is AMP + ATP = 2 ADP. This Pyrococcus abyssi (strain GE5 / Orsay) protein is Adenylate kinase (adkA).